The sequence spans 243 residues: 3-deoxy-manno-octulosonate cytidylyltransferase (243 aa).

This sequence belongs to the KdsB family.

It localises to the cytoplasm. It carries out the reaction 3-deoxy-alpha-D-manno-oct-2-ulosonate + CTP = CMP-3-deoxy-beta-D-manno-octulosonate + diphosphate. It functions in the pathway nucleotide-sugar biosynthesis; CMP-3-deoxy-D-manno-octulosonate biosynthesis; CMP-3-deoxy-D-manno-octulosonate from 3-deoxy-D-manno-octulosonate and CTP: step 1/1. It participates in bacterial outer membrane biogenesis; lipopolysaccharide biosynthesis. Activates KDO (a required 8-carbon sugar) for incorporation into bacterial lipopolysaccharide in Gram-negative bacteria. The chain is 3-deoxy-manno-octulosonate cytidylyltransferase from Helicobacter pylori (strain G27).